Here is a 43-residue protein sequence, read N- to C-terminus: Thymosin beta-b (43 aa).

Composition is skewed to basic and acidic residues over residues 1-25 and 33-43; these read MADKPDISEVSQFDKTKLKKTETQE and ETIEQEKQCEA. Residues 1–43 are disordered; it reads MADKPDISEVSQFDKTKLKKTETQEKNTLPTKETIEQEKQCEA.

It belongs to the thymosin beta family.

It localises to the cytoplasm. It is found in the cytoskeleton. Plays an important role in the organization of the cytoskeleton. Binds to and sequesters actin monomers (G actin) and therefore inhibits actin polymerization. This chain is Thymosin beta-b, found in Cyprinus carpio (Common carp).